Consider the following 1630-residue polypeptide: Probable phosphoinositide phosphatase SAC9 (1630 aa).

The SAC domain maps to 147–527 (LTELDIDGKH…ADAVTGKSYY (381 aa)). Positions 456 to 467 (RFNCADSLDRTN) match the Phosphatase catalytic core; degenerate motif. The region spanning 508–542 (APLPPGWEKRADAVTGKSYYIDHNTKTTTWSHPCP) is the WW domain.

As to expression, ubiquitous. Most abundant in the roots with lower expression levels throughout the leaves and shoot.

Probable phosphoinositide phosphatase that could be involved in stress signaling. The chain is Probable phosphoinositide phosphatase SAC9 (SAC9) from Arabidopsis thaliana (Mouse-ear cress).